Consider the following 642-residue polypeptide: Protein BZZ1 (642 aa).

An F-BAR domain is found at 6–272 (YKFSDELHDD…EIAKNEPVLD (267 aa)). A coiled-coil region spans residues 113–190 (LDIAEKLKKL…QRNLKLSESD (78 aa)). Residues 397–447 (FHDFKHVSFKLPTSCSYCREIIWGLSKRGCVCKNCGFKCHARCELLVPANC) form a Phorbol-ester/DAG-type zinc finger. SH3 domains lie at 515–575 (ASKV…LNDE) and 584–642 (GDSS…VTDV).

This sequence belongs to the BZZ1 family.

It is found in the cell tip. Its subcellular location is the cytoplasm. The protein localises to the cytoskeleton. The protein resides in the actin patch. Plays a role in endocytosis and trafficking to the vacuole. Functions with type I myosins to restore polarity of the actin cytoskeleton after NaCl stress. This Schizosaccharomyces pombe (strain 972 / ATCC 24843) (Fission yeast) protein is Protein BZZ1 (bzz1).